Here is a 105-residue protein sequence, read N- to C-terminus: Replication restart protein PriB (105 aa).

The SSB domain maps to 1–102; that stretch reads MTTNRLVLSG…LHAEQIELID (102 aa).

This sequence belongs to the PriB family. Homodimer. Interacts with PriA and DnaT. Component of the replication restart primosome. Primosome assembly occurs via a 'hand-off' mechanism. PriA binds to replication forks, subsequently PriB then DnaT bind; DnaT then displaces ssDNA to generate the helicase loading substrate.

Involved in the restart of stalled replication forks, which reloads the replicative helicase on sites other than the origin of replication; the PriA-PriB pathway is the major replication restart pathway. During primosome assembly it facilitates complex formation between PriA and DnaT on DNA; stabilizes PriA on DNA. Stimulates the DNA unwinding activity of PriA helicase. This is Replication restart protein PriB from Photorhabdus laumondii subsp. laumondii (strain DSM 15139 / CIP 105565 / TT01) (Photorhabdus luminescens subsp. laumondii).